A 419-amino-acid chain; its full sequence is UDP-N-acetylglucosamine 1-carboxyvinyltransferase (419 aa).

22-23 (KN) contacts phosphoenolpyruvate. Arg-93 contacts UDP-N-acetyl-alpha-D-glucosamine. Catalysis depends on Cys-117, which acts as the Proton donor. The residue at position 117 (Cys-117) is a 2-(S-cysteinyl)pyruvic acid O-phosphothioketal. 2 residues coordinate UDP-N-acetyl-alpha-D-glucosamine: Asp-307 and Ile-329.

The protein belongs to the EPSP synthase family. MurA subfamily.

The protein localises to the cytoplasm. The catalysed reaction is phosphoenolpyruvate + UDP-N-acetyl-alpha-D-glucosamine = UDP-N-acetyl-3-O-(1-carboxyvinyl)-alpha-D-glucosamine + phosphate. The protein operates within cell wall biogenesis; peptidoglycan biosynthesis. In terms of biological role, cell wall formation. Adds enolpyruvyl to UDP-N-acetylglucosamine. The polypeptide is UDP-N-acetylglucosamine 1-carboxyvinyltransferase (Shewanella sp. (strain ANA-3)).